Consider the following 196-residue polypeptide: Ribonuclease HII (196 aa).

Residues 13-196 (LLVAGVDEAG…SFSPLKKKLF (184 aa)) enclose the RNase H type-2 domain. A divalent metal cation is bound by residues Asp-19, Glu-20, and Asp-111.

It belongs to the RNase HII family. Mn(2+) serves as cofactor. It depends on Mg(2+) as a cofactor.

It localises to the cytoplasm. The catalysed reaction is Endonucleolytic cleavage to 5'-phosphomonoester.. Its function is as follows. Endonuclease that specifically degrades the RNA of RNA-DNA hybrids. The protein is Ribonuclease HII (rnhB) of Aquifex aeolicus (strain VF5).